Consider the following 421-residue polypeptide: Forkhead box protein fkh-4 (421 aa).

The segment at residues 118 to 218 (RPPISYVALC…SDADFDFFRK (101 aa)) is a DNA-binding region (fork-head).

The protein localises to the nucleus. In terms of biological role, transcription factor. Regulates expression of a class of small RNAs, known as 21U-RNAs, perhaps acting redundantly with fkh-3 and fkh-5. This chain is Forkhead box protein fkh-4, found in Caenorhabditis elegans.